Consider the following 181-residue polypeptide: Nucleoside triphosphate/diphosphate phosphatase (181 aa).

The active-site Proton donor is the Arg26. Mg(2+) contacts are provided by Asn90, Asp106, Asp108, Asp110, Asp123, and Glu126.

It belongs to the Ntdp family. Mg(2+) is required as a cofactor.

It catalyses the reaction a ribonucleoside 5'-triphosphate + H2O = a ribonucleoside 5'-diphosphate + phosphate + H(+). The catalysed reaction is a ribonucleoside 5'-diphosphate + H2O = a ribonucleoside 5'-phosphate + phosphate + H(+). Functionally, has nucleoside phosphatase activity towards nucleoside triphosphates and nucleoside diphosphates. The sequence is that of Nucleoside triphosphate/diphosphate phosphatase from Staphylococcus carnosus (strain TM300).